A 295-amino-acid polypeptide reads, in one-letter code: MAVSHRLLRPATTTIKNTFSSLFIRSLSSSSSGSSLDPKIDLEEAAAQLGKSSSTSTSPYKGRNFHWVFLGCPGVGKGTYASRLSSLLGVPHIATGDLVREELSSSGLLSSQLKELVNHGKLVPDEFIISLLSKRLQAGKDKGESGYILDGFPRTVTQAEILEGVTNIDLVINLKLREEALLAKCLGRRICSECGGNYNVACIDIKGDDDTPRMYMPPLLPPPNCESKLISRADDTEEVVKERLRIYNKMTQPVEEFYKKRGKLLEFELPGGIPESWARLLRALHLEDDKQSAIA.

Residues 1–46 (MAVSHRLLRPATTTIKNTFSSLFIRSLSSSSSGSSLDPKIDLEEAA) constitute a chloroplast transit peptide. Residue 74–79 (GVGKGT) participates in ATP binding. An NMP region spans residues 94-123 (ATGDLVREELSSSGLLSSQLKELVNHGKLV). AMP-binding positions include threonine 95, arginine 100, 121–123 (KLV), 151–154 (GFPR), and glutamine 158. An LID region spans residues 187–235 (GRRICSECGGNYNVACIDIKGDDDTPRMYMPPLLPPPNCESKLISRADD). Position 188 (arginine 188) interacts with ATP. Position 243 (arginine 243) interacts with AMP. Glycine 271 contributes to the ATP binding site.

It belongs to the adenylate kinase family. Monomer.

The protein localises to the plastid. Its subcellular location is the chloroplast. The enzyme catalyses AMP + ATP = 2 ADP. Catalyzes the reversible transfer of the terminal phosphate group between ATP and AMP. Plays an important role in cellular energy homeostasis and in adenine nucleotide metabolism. This Arabidopsis thaliana (Mouse-ear cress) protein is Probable adenylate kinase 6, chloroplastic.